Here is a 231-residue protein sequence, read N- to C-terminus: Nitrate reductase [NAD(P)H] (231 aa).

The region spanning 1–85 (PQKLGLPVGR…KGPHRHIEYT (85 aa)) is the FAD-binding FR-type domain. Residues 25–28 (RAYT), 42–46 (LIKIY), F47, 59–61 (LMS), and T112 contribute to the FAD site.

The protein belongs to the nitrate reductase family. Homodimer. The cofactor is FAD. Heme serves as cofactor. Requires Mo-molybdopterin as cofactor.

The catalysed reaction is nitrite + NAD(+) + H2O = nitrate + NADH + H(+). It catalyses the reaction nitrite + NADP(+) + H2O = nitrate + NADPH + H(+). Its function is as follows. Nitrate reductase is a key enzyme involved in the first step of nitrate assimilation in plants, fungi and bacteria. The protein is Nitrate reductase [NAD(P)H] (NAR) of Zea mays (Maize).